The primary structure comprises 406 residues: DNA primase DnaG (406 aa).

Residues 169–247 enclose the Toprim domain; the sequence is PNLIIVEGRA…KIDFVARAPI (79 aa). Glu-175, Asp-220, and Asp-222 together coordinate Mg(2+).

It belongs to the archaeal DnaG primase family. Forms a ternary complex with MCM helicase and DNA. Component of the archaeal exosome complex. Interacts with Csl4 but not with Rrp4. It depends on Mg(2+) as a cofactor.

The catalysed reaction is ssDNA + n NTP = ssDNA/pppN(pN)n-1 hybrid + (n-1) diphosphate.. RNA polymerase that catalyzes the synthesis of short RNA molecules used as primers for DNA polymerase during DNA replication. Can use NTPs but not dNTPs. Binds DNA. Also part of the exosome, which is a complex involved in RNA degradation. Acts as a poly(A)-binding protein that enhances the interaction between heteromeric, adenine-rich transcripts and the exosome. The protein is DNA primase DnaG of Saccharolobus solfataricus (strain ATCC 35092 / DSM 1617 / JCM 11322 / P2) (Sulfolobus solfataricus).